The sequence spans 441 residues: Ribulose bisphosphate carboxylase large chain (441 aa).

Lysine 5 bears the N6,N6,N6-trimethyllysine mark. Substrate contacts are provided by asparagine 114 and threonine 164. The active-site Proton acceptor is the lysine 166. Lysine 168 contributes to the substrate binding site. Positions 192, 194, and 195 each coordinate Mg(2+). N6-carboxylysine is present on lysine 192. Histidine 285 functions as the Proton acceptor in the catalytic mechanism. Arginine 286, histidine 318, and serine 370 together coordinate substrate.

The protein belongs to the RuBisCO large chain family. Type I subfamily. Heterohexadecamer of 8 large chains and 8 small chains; disulfide-linked. The disulfide link is formed within the large subunit homodimers. Mg(2+) serves as cofactor. The disulfide bond which can form in the large chain dimeric partners within the hexadecamer appears to be associated with oxidative stress and protein turnover.

The protein resides in the plastid. It is found in the chloroplast. The catalysed reaction is 2 (2R)-3-phosphoglycerate + 2 H(+) = D-ribulose 1,5-bisphosphate + CO2 + H2O. The enzyme catalyses D-ribulose 1,5-bisphosphate + O2 = 2-phosphoglycolate + (2R)-3-phosphoglycerate + 2 H(+). Its function is as follows. RuBisCO catalyzes two reactions: the carboxylation of D-ribulose 1,5-bisphosphate, the primary event in carbon dioxide fixation, as well as the oxidative fragmentation of the pentose substrate in the photorespiration process. Both reactions occur simultaneously and in competition at the same active site. The protein is Ribulose bisphosphate carboxylase large chain of Drosera dichrosepala (Rusty sundew).